Reading from the N-terminus, the 546-residue chain is Chaperonin GroEL (546 aa).

Residues 30 to 33 (TLGP), Lys51, 87 to 91 (DGTTT), Gly415, 479 to 481 (NAA), and Asp495 contribute to the ATP site.

This sequence belongs to the chaperonin (HSP60) family. Forms a cylinder of 14 subunits composed of two heptameric rings stacked back-to-back. Interacts with the co-chaperonin GroES.

It is found in the cytoplasm. The enzyme catalyses ATP + H2O + a folded polypeptide = ADP + phosphate + an unfolded polypeptide.. In terms of biological role, together with its co-chaperonin GroES, plays an essential role in assisting protein folding. The GroEL-GroES system forms a nano-cage that allows encapsulation of the non-native substrate proteins and provides a physical environment optimized to promote and accelerate protein folding. This Stutzerimonas stutzeri (strain A1501) (Pseudomonas stutzeri) protein is Chaperonin GroEL.